Consider the following 1992-residue polypeptide: Fer-1-like protein 4 (1992 aa).

3 C2 domains span residues 1-97 (MALT…VLRE), 214-330 (PRGD…QKWA), and 369-502 (TSSD…AGFN). Residues 1–1952 (MALTVCVRHL…PLKTFIFFIW (1952 aa)) lie on the Extracellular side of the membrane. Disordered regions lie at residues 554–606 (RVEP…APEI), 661–686 (AGRQEEQSGQGSRADEGSESSTLEVQ), and 691–710 (SEDRGAGQEEQELLGTPAQW). Positions 559–569 (PSQTTQRSGLS) are enriched in polar residues. Positions 572–581 (TGKKKKKKEK) are enriched in basic residues. 2 consecutive C2 domains span residues 951-1078 (PSSG…ELQF) and 1126-1250 (ISGH…PQEE). Disordered regions lie at residues 1245–1276 (EDPQEEEETEEETRDLVPHGPQGEKSLPEAGT) and 1322–1361 (FQGQPSSDDEMDEAGDADGTHLISGDREAQEQGETDSKVS). Acidic residues-rich tracts occupy residues 1247–1257 (PQEEEETEEET) and 1328–1337 (SDDEMDEAGD). 2 C2 domains span residues 1430–1549 (SFSE…ANCG) and 1675–1824 (VPAP…EHCS). Ca(2+) is bound by residues Asp-1464, Asp-1470, Asp-1519, Asp-1521, Asp-1527, Asp-1795, Ser-1798, and Asp-1801. The segment at 1862–1885 (EAREAQAGKKRKRKRRAGRPEDLE) is disordered. The span at 1869–1878 (GKKRKRKRRA) shows a compositional bias: basic residues. The helical transmembrane segment at 1953-1973 (RRYWRILVLLLLALITIFLLL) threads the bilayer. Residues 1974 to 1992 (VFYTIPGQISEVIFSPVHK) lie on the Cytoplasmic side of the membrane.

The cofactor is Ca(2+).

The protein resides in the membrane. The polypeptide is Fer-1-like protein 4 (Fer1l4) (Mus musculus (Mouse)).